The primary structure comprises 3127 residues: Probable polyketide synthase 33 (3127 aa).

The Ketosynthase family 3 (KS3) domain occupies Ser24–Glu457. Active-site for beta-ketoacyl synthase activity residues include Cys196, His335, and His380. Residues Gly660–Tyr693 form an acyl/malonyl transferase region. Ser670 functions as the For acyl/malonyl transferase activity in the catalytic mechanism. The segment at Gly958–Ile1080 is N-terminal hotdog fold. The PKS/mFAS DH domain occupies Gly958–Ser1257. Catalysis depends on His992, which acts as the Proton acceptor; for dehydratase activity. The C-terminal hotdog fold stretch occupies residues Asn1096 to Ser1257. Asp1168 functions as the Proton donor; for dehydratase activity in the catalytic mechanism. The segment at Ser1369–Tyr1394 is disordered. A compositionally biased stretch (low complexity) spans Asn1370–Tyr1394. The Carrier domain occupies Ser2539–His2616. Ser2576 is modified (O-(pantetheine 4'-phosphoryl)serine). Residues Asn2617–Asn2659 are disordered. Positions Asn2617–Phe2671 form a coiled coil. Residues Val2937 to Phe2957 traverse the membrane as a helical segment.

Requires pantetheine 4'-phosphate as cofactor.

Its subcellular location is the membrane. Its function is as follows. Probable polyketide synthase. The chain is Probable polyketide synthase 33 (pks33) from Dictyostelium discoideum (Social amoeba).